A 364-amino-acid chain; its full sequence is D-alanine--D-alanine ligase (364 aa).

Residues 140-346 form the ATP-grasp domain; sequence KKLALLEGIP…YSQLIDKLIS (207 aa). An ATP-binding site is contributed by 173–228; sequence ESEFSYPVFVKPANSGSSVGISKAKDREDLVLAIHEAFLYDTKILIEQAINAREIE. Residues Asp299, Glu313, and Asn315 each contribute to the Mg(2+) site.

This sequence belongs to the D-alanine--D-alanine ligase family. Mg(2+) serves as cofactor. It depends on Mn(2+) as a cofactor.

Its subcellular location is the cytoplasm. It carries out the reaction 2 D-alanine + ATP = D-alanyl-D-alanine + ADP + phosphate + H(+). The protein operates within cell wall biogenesis; peptidoglycan biosynthesis. Its function is as follows. Cell wall formation. The chain is D-alanine--D-alanine ligase from Caldicellulosiruptor bescii (strain ATCC BAA-1888 / DSM 6725 / KCTC 15123 / Z-1320) (Anaerocellum thermophilum).